The following is a 999-amino-acid chain: Hypoxia up-regulated protein 1 (999 aa).

The first 32 residues, 1–32 (MAATVRRQRPRRLLCWTLVAVLLADLLALSDT), serve as a signal peptide directing secretion. Residues asparagine 155, asparagine 222, and asparagine 515 are each glycosylated (N-linked (GlcNAc...) asparagine). Residues 564–694 (VEDSPEEEST…KKQKPARKQK (131 aa)) form a disordered region. Serine 567 carries the post-translational modification Phosphoserine. Over residues 574 to 583 (LTKLGNTISS) the composition is skewed to polar residues. An N-linked (GlcNAc...) asparagine glycan is attached at asparagine 596. Basic and acidic residues-rich tracts occupy residues 611-626 (GSKD…KEET) and 641-670 (PKGD…EEKG). Residues asparagine 830, asparagine 862, and asparagine 869 are each glycosylated (N-linked (GlcNAc...) asparagine). At lysine 883 the chain carries N6-acetyllysine. Residues 909 to 999 (AKFTKPRPRP…QKRSSKNDEL (91 aa)) are disordered. Asparagine 922 and asparagine 931 each carry an N-linked (GlcNAc...) asparagine glycan. Residues 949–962 (EEAKPILEPDKEET) are compositionally biased toward basic and acidic residues. Positions 996–999 (NDEL) match the Prevents secretion from ER motif.

The protein belongs to the heat shock protein 70 family. Part of a large chaperone multiprotein complex comprising DNAJB11, HSP90B1, HSPA5, HYOU, PDIA2, PDIA4, PDIA6, PPIB, SDF2L1, UGGT1 and very small amounts of ERP29, but not, or at very low levels, CALR nor CANX.

The protein localises to the endoplasmic reticulum lumen. Functionally, has a pivotal role in cytoprotective cellular mechanisms triggered by oxygen deprivation. Promotes HSPA5/BiP-mediated ATP nucleotide exchange and thereby activates the unfolded protein response (UPR) pathway in the presence of endoplasmic reticulum stress. May play a role as a molecular chaperone and participate in protein folding. The sequence is that of Hypoxia up-regulated protein 1 (HYOU1) from Cricetulus griseus (Chinese hamster).